Consider the following 269-residue polypeptide: Protein CURLY FLAG LEAF 1 (269 aa).

The interval 17–44 (SLNGGGGGGGGRRRGRRAAAAEGSDDSE) is disordered. Residues 47 to 52 (TVELNS) carry the EAR motif. In terms of domain architecture, WW spans 54–88 (VALPYHWEQCLDIRTGQVYYINWEDGTRTTIDPRS). Disordered regions lie at residues 83–133 (TIDP…SGYT) and 174–218 (GDDE…SGAG). Composition is skewed to low complexity over residues 87 to 106 (RSSSAYSPSPASRSASSSSR), 121 to 133 (AAAASTTTSSGYT), and 180 to 202 (SSSSSSSSSSSSASSSRGSAVSS). Residues 203-212 (TLSSFSPTDE) show a composition bias toward polar residues.

Binds to HDG1.

Negatively regulates the cuticle development probably by interacting with the HD-ZIP IV transcription factor HDG1. The sequence is that of Protein CURLY FLAG LEAF 1 from Oryza sativa subsp. indica (Rice).